The sequence spans 89 residues: Putative regulatory protein RBAM_015500 (89 aa).

This sequence belongs to the RemA family.

In Bacillus velezensis (strain DSM 23117 / BGSC 10A6 / LMG 26770 / FZB42) (Bacillus amyloliquefaciens subsp. plantarum), this protein is Putative regulatory protein RBAM_015500.